A 386-amino-acid chain; its full sequence is Protein phosphatase methylesterase 1 (386 aa).

The tract at residues 1–38 (MSALEKSMHLGRLPSRPPLPGSGGSQSGAKMRMGPGRK) is disordered. Serine 15 is subject to Phosphoserine. An Asymmetric dimethylarginine; alternate modification is found at arginine 16. Arginine 16 carries the omega-N-methylarginine; alternate modification. At serine 42 the chain carries Phosphoserine. Residues serine 156 and aspartate 181 contribute to the active site. Over residues 254 to 265 (IIEEEEEDEEGS) the composition is skewed to acidic residues. Residues 254–280 (IIEEEEEDEEGSESISKRKKEDDMETK) form a disordered region. A compositionally biased stretch (basic and acidic residues) spans 268–280 (ISKRKKEDDMETK). Histidine 349 is a catalytic residue.

The protein belongs to the AB hydrolase superfamily. Binds PPP2CA and PPP2CB. In terms of processing, phosphorylated by SIK1 following increases in intracellular sodium, leading to dissociation from the protein phosphatase 2A (PP2A) complex and subsequent dephosphorylation of sodium/potassium-transporting ATPase ATP1A1.

The catalysed reaction is [phosphatase 2A protein]-C-terminal L-leucine methyl ester + H2O = [phosphatase 2A protein]-C-terminal L-leucine + methanol + H(+). Its function is as follows. Demethylates proteins that have been reversibly carboxymethylated. Demethylates PPP2CB (in vitro) and PPP2CA. Binding to PPP2CA displaces the manganese ion and inactivates the enzyme. This Homo sapiens (Human) protein is Protein phosphatase methylesterase 1 (PPME1).